The primary structure comprises 143 residues: Hemoglobin-1 (143 aa).

Serine 2 is subject to N-acetylserine. The Globin domain occupies 2-143 (SLSAAQKDNV…ALMGMIRPNM (142 aa)). Residue histidine 97 participates in heme b binding.

It belongs to the globin family. In terms of assembly, monomer.

Its subcellular location is the cytoplasm. Functionally, serves to transport hydrogen sulfide to autotrophic bacteria. The protein is Hemoglobin-1 of Phacoides pectinatus (Thick lucine).